A 204-amino-acid chain; its full sequence is Large ribosomal subunit protein uL22m (204 aa).

The N-terminal 27 residues, 1–27 (MAASITASVWGTLLKIHRGLTASGCLP), are a transit peptide targeting the mitochondrion.

This sequence belongs to the universal ribosomal protein uL22 family. As to quaternary structure, component of the mitochondrial ribosome large subunit (39S) which comprises a 16S rRNA and about 50 distinct proteins.

Its subcellular location is the mitochondrion. The protein is Large ribosomal subunit protein uL22m (mrpl22) of Xenopus tropicalis (Western clawed frog).